We begin with the raw amino-acid sequence, 549 residues long: Glucose-6-phosphate isomerase (549 aa).

Catalysis depends on E355, which acts as the Proton donor. Active-site residues include H386 and K514.

The protein belongs to the GPI family.

Its subcellular location is the cytoplasm. It catalyses the reaction alpha-D-glucose 6-phosphate = beta-D-fructose 6-phosphate. It functions in the pathway carbohydrate biosynthesis; gluconeogenesis. The protein operates within carbohydrate degradation; glycolysis; D-glyceraldehyde 3-phosphate and glycerone phosphate from D-glucose: step 2/4. Catalyzes the reversible isomerization of glucose-6-phosphate to fructose-6-phosphate. This Edwardsiella ictaluri (strain 93-146) protein is Glucose-6-phosphate isomerase.